We begin with the raw amino-acid sequence, 465 residues long: Glutamate--tRNA ligase (465 aa).

Residues 10–20 (PSPTGQLHIGG) carry the 'HIGH' region motif. Zn(2+) contacts are provided by C99, C101, C126, and E128. Positions 236 to 240 (KLSKR) match the 'KMSKS' region motif. K239 lines the ATP pocket.

This sequence belongs to the class-I aminoacyl-tRNA synthetase family. Glutamate--tRNA ligase type 1 subfamily. In terms of assembly, monomer. Zn(2+) serves as cofactor.

It is found in the cytoplasm. It carries out the reaction tRNA(Glu) + L-glutamate + ATP = L-glutamyl-tRNA(Glu) + AMP + diphosphate. Functionally, catalyzes the attachment of glutamate to tRNA(Glu) in a two-step reaction: glutamate is first activated by ATP to form Glu-AMP and then transferred to the acceptor end of tRNA(Glu). In Lawsonia intracellularis (strain PHE/MN1-00), this protein is Glutamate--tRNA ligase.